A 273-amino-acid chain; its full sequence is Formamidopyrimidine-DNA glycosylase (273 aa).

Pro-2 acts as the Schiff-base intermediate with DNA in catalysis. The active-site Proton donor is the Glu-3. The Proton donor; for beta-elimination activity role is filled by Lys-60. Positions 94, 113, and 154 each coordinate DNA. The FPG-type zinc-finger motif lies at 239–273 (EAYGRTGEPCRRCGTPIERIVVAQRSTHICPVCQA). Arg-263 functions as the Proton donor; for delta-elimination activity in the catalytic mechanism.

This sequence belongs to the FPG family. As to quaternary structure, monomer. Zn(2+) is required as a cofactor.

The enzyme catalyses Hydrolysis of DNA containing ring-opened 7-methylguanine residues, releasing 2,6-diamino-4-hydroxy-5-(N-methyl)formamidopyrimidine.. The catalysed reaction is 2'-deoxyribonucleotide-(2'-deoxyribose 5'-phosphate)-2'-deoxyribonucleotide-DNA = a 3'-end 2'-deoxyribonucleotide-(2,3-dehydro-2,3-deoxyribose 5'-phosphate)-DNA + a 5'-end 5'-phospho-2'-deoxyribonucleoside-DNA + H(+). Its function is as follows. Involved in base excision repair of DNA damaged by oxidation or by mutagenic agents. Acts as a DNA glycosylase that recognizes and removes damaged bases. Has a preference for oxidized purines, such as 7,8-dihydro-8-oxoguanine (8-oxoG). Has AP (apurinic/apyrimidinic) lyase activity and introduces nicks in the DNA strand. Cleaves the DNA backbone by beta-delta elimination to generate a single-strand break at the site of the removed base with both 3'- and 5'-phosphates. In Herpetosiphon aurantiacus (strain ATCC 23779 / DSM 785 / 114-95), this protein is Formamidopyrimidine-DNA glycosylase.